A 468-amino-acid chain; its full sequence is Glutamyl-tRNA reductase (468 aa).

Residues 49–52 (TCNR), S109, 114–116 (EQQ), and Q120 contribute to the substrate site. Catalysis depends on C50, which acts as the Nucleophile. 189-194 (GAGAMG) contributes to the NADP(+) binding site. The tract at residues 443 to 468 (VPSGFDAESRRGGGDMQSSPKRSPSN) is disordered. Polar residues predominate over residues 458–468 (MQSSPKRSPSN).

This sequence belongs to the glutamyl-tRNA reductase family. Homodimer.

It catalyses the reaction (S)-4-amino-5-oxopentanoate + tRNA(Glu) + NADP(+) = L-glutamyl-tRNA(Glu) + NADPH + H(+). The protein operates within porphyrin-containing compound metabolism; protoporphyrin-IX biosynthesis; 5-aminolevulinate from L-glutamyl-tRNA(Glu): step 1/2. Catalyzes the NADPH-dependent reduction of glutamyl-tRNA(Glu) to glutamate 1-semialdehyde (GSA). This is Glutamyl-tRNA reductase from Mycobacterium tuberculosis (strain ATCC 25177 / H37Ra).